A 252-amino-acid chain; its full sequence is Flap endonuclease Xni (252 aa).

Position 105 (Asp-105) interacts with Mg(2+). In terms of domain architecture, 5'-3' exonuclease spans 162–250 (ERTQFIDYLA…LNANLSQFRL (89 aa)). 5 residues coordinate K(+): Leu-172, Ala-173, Pro-181, Val-183, and Ile-186. Residues 185 to 190 (GIGPKS) are interaction with DNA.

It belongs to the Xni family. The cofactor is Mg(2+). Requires K(+) as cofactor.

Functionally, has flap endonuclease activity. During DNA replication, flap endonucleases cleave the 5'-overhanging flap structure that is generated by displacement synthesis when DNA polymerase encounters the 5'-end of a downstream Okazaki fragment. In Shewanella woodyi (strain ATCC 51908 / MS32), this protein is Flap endonuclease Xni.